The following is a 446-amino-acid chain: Packaging protein 1 (446 aa).

A disordered region spans residues 1 to 72 (MEEKAGLRHL…SQVSKSKKQR (72 aa)). The segment covering 10 to 21 (LQNQQNEPSQDP) has biased composition (polar residues). The segment covering 32–43 (HSDRNHLNKEAE) has biased composition (basic and acidic residues). Residue 170–177 (GPTGCGKS) coordinates ATP. Positions 439–446 (RYYHSKKK) are DNA-binding.

The protein belongs to the adenoviridae packaging protein 1 family. Homodimer. Part of a genome packaging complex composed of packaging proteins 1, 2 and 3; this complex specifically binds to the packaging sequence on the left end of viral genomic DNA and performs packaging of the viral genome. Interacts with protein 33K.

Its subcellular location is the virion. It localises to the host nucleus. The protein localises to the host nucleoplasm. The protein resides in the host nucleolus. Component of the packaging machinery which encapsidates the viral DNA into preformed capsids and transcriptional activator of the viral major late promoter (MLP). Binds, along with packaging proteins 2 and 3, to the specific packaging sequence on the left end of viral genomic DNA and displays ATPase activity thereby providing the power stroke of the packaging machinery. The activity of packaging protein IVa2 is stimulated by protein 33K which acts as a terminase. May be the protein that pumps DNA into the capsid powered by ATP hydrolysis. Specifically binds to the 5'-CG-3' nucleotides of the repeats making up the packaging sequence. Component of the DEF-A and DEF-B transcription factors that bind downstream elements of the major late promoter (MLP), and stimulate transcription from the MLP after initiation of viral DNA replication. DEF-A is a heterodimer packaging proteins 1 and 2 and DEF-B is a homodimer of packaging protein 1. In Canine adenovirus serotype 1 (strain CLL) (CAdV-1), this protein is Packaging protein 1.